A 408-amino-acid chain; its full sequence is Aminopeptidase T (408 aa).

A divalent metal cation-binding residues include E250, E316, E340, H345, H376, and D378.

Belongs to the peptidase M29 family. As to quaternary structure, homodimer. Co(2+) serves as cofactor. Requires Zn(2+) as cofactor. Mg(2+) is required as a cofactor.

In terms of biological role, metal-dependent exopeptidase. In Thermus aquaticus, this protein is Aminopeptidase T.